Reading from the N-terminus, the 323-residue chain is ADP-ribose glycohydrolase MACROD1 (323 aa).

3 positions are modified to N6-succinyllysine: K94, K101, and K127. K136 is covalently cross-linked (Glycyl lysine isopeptide (Lys-Gly) (interchain with G-Cter in SUMO2)). A Macro domain is found at 139 to 320 (DPKYKKDKQL…IYRERLPHYF (182 aa)). 157–159 (GDI) provides a ligand contact to substrate. The residue at position 161 (K161) is an N6-acetyllysine. Residues 170-172 (AAN), 177-182 (GGGGVD), 265-271 (ISTGVFG), and F304 contribute to the substrate site.

The protein belongs to the MacroD-type family. MacroD1/2-like subfamily. Interacts with ESR1; Interacts in a manner that is estrogen independent but is enhanced by estrogen. Interacts (via macro domain) with AR.

It localises to the nucleus. The catalysed reaction is 3''-O-acetyl-ADP-D-ribose + H2O = ADP-D-ribose + acetate + H(+). It carries out the reaction 2''-O-acetyl-ADP-D-ribose + H2O = ADP-D-ribose + acetate + H(+). The enzyme catalyses 4-O-(ADP-D-ribosyl)-L-aspartyl-[protein] + H2O = L-aspartyl-[protein] + ADP-D-ribose + H(+). It catalyses the reaction 5-O-(ADP-D-ribosyl)-L-glutamyl-[protein] + H2O = L-glutamyl-[protein] + ADP-D-ribose + H(+). The catalysed reaction is alpha-NAD(+) + H2O = ADP-D-ribose + nicotinamide + H(+). Its activity is regulated as follows. Subject to competitive inhibition by the product ADP-ribose. In terms of biological role, removes ADP-ribose from aspartate and glutamate residues in proteins bearing a single ADP-ribose moiety. Inactive towards proteins bearing poly-ADP-ribose. Deacetylates O-acetyl-ADP ribose, a signaling molecule generated by the deacetylation of acetylated lysine residues in histones and other proteins. Plays a role in estrogen signaling. Binds to androgen receptor (AR) and amplifies the transactivation function of AR in response to androgen. May play an important role in carcinogenesis and/or progression of hormone-dependent cancers by feed-forward mechanism that activates ESR1 transactivation. Could be an ESR1 coactivator, providing a positive feedback regulatory loop for ESR1 signal transduction. Could be involved in invasive growth by down-regulating CDH1 in endometrial cancer cells. Enhances ESR1-mediated transcription activity. This is ADP-ribose glycohydrolase MACROD1 from Mus musculus (Mouse).